The following is a 203-amino-acid chain: Urease accessory protein UreG (203 aa).

A GTP-binding site is contributed by 10–17; the sequence is GPVGAGKT.

It belongs to the SIMIBI class G3E GTPase family. UreG subfamily. As to quaternary structure, homodimer. UreD, UreF and UreG form a complex that acts as a GTP-hydrolysis-dependent molecular chaperone, activating the urease apoprotein by helping to assemble the nickel containing metallocenter of UreC. The UreE protein probably delivers the nickel.

It localises to the cytoplasm. In terms of biological role, facilitates the functional incorporation of the urease nickel metallocenter. This process requires GTP hydrolysis, probably effectuated by UreG. The sequence is that of Urease accessory protein UreG from Kocuria rhizophila (strain ATCC 9341 / DSM 348 / NBRC 103217 / DC2201).